The following is a 182-amino-acid chain: NADH-quinone oxidoreductase subunit I (182 aa).

4Fe-4S ferredoxin-type domains are found at residues 52-82 (LTRD…LQKA) and 92-121 (DFFR…LTPD). [4Fe-4S] cluster-binding residues include C62, C65, C68, C72, C101, C104, C107, and C111.

Belongs to the complex I 23 kDa subunit family. NDH-1 is composed of 13 different subunits. Subunits NuoA, H, J, K, L, M, N constitute the membrane sector of the complex. It depends on [4Fe-4S] cluster as a cofactor.

Its subcellular location is the cell inner membrane. It catalyses the reaction a quinone + NADH + 5 H(+)(in) = a quinol + NAD(+) + 4 H(+)(out). In terms of biological role, NDH-1 shuttles electrons from NADH, via FMN and iron-sulfur (Fe-S) centers, to quinones in the respiratory chain. The immediate electron acceptor for the enzyme in this species is believed to be ubiquinone. Couples the redox reaction to proton translocation (for every two electrons transferred, four hydrogen ions are translocated across the cytoplasmic membrane), and thus conserves the redox energy in a proton gradient. The sequence is that of NADH-quinone oxidoreductase subunit I from Pseudomonas syringae pv. syringae (strain B728a).